A 153-amino-acid polypeptide reads, in one-letter code: Cofilin (153 aa).

The 133-residue stretch at 15–147 (GVAVNDSALQ…AYESVLERVS (133 aa)) folds into the ADF-H domain.

It belongs to the actin-binding proteins ADF family.

The protein resides in the cytoplasm. The protein localises to the cytoskeleton. Its subcellular location is the nucleus matrix. Controls reversibly actin polymerization and depolymerization in a pH-sensitive manner. It has the ability to bind G- and F-actin in a 1:1 ratio of cofilin to actin. Binding to F-actin is regulated by tropomyosin. It is the major component of intranuclear and cytoplasmic actin rods. Required for accumulation of actin at the cell division site via depolymerizing actin at the cell ends. In association with myosin II has a role in the assembly of the contractile ring via severing actin filaments. Involved in the maintenance of the contractile ring once formed. In association with profilin and capping protein, has a role in the mitotic reorganization of the actin cytoskeleton. The sequence is that of Cofilin (COF1) from Yarrowia lipolytica (strain CLIB 122 / E 150) (Yeast).